Reading from the N-terminus, the 634-residue chain is tRNA uridine 5-carboxymethylaminomethyl modification enzyme MnmG (634 aa).

Gly-14–Gly-19 serves as a coordination point for FAD. Position 279–293 (Gly-279–Phe-293) interacts with NAD(+).

Belongs to the MnmG family. Homodimer. Heterotetramer of two MnmE and two MnmG subunits. It depends on FAD as a cofactor.

The protein resides in the cytoplasm. Its function is as follows. NAD-binding protein involved in the addition of a carboxymethylaminomethyl (cmnm) group at the wobble position (U34) of certain tRNAs, forming tRNA-cmnm(5)s(2)U34. In Xanthomonas oryzae pv. oryzae (strain KACC10331 / KXO85), this protein is tRNA uridine 5-carboxymethylaminomethyl modification enzyme MnmG.